The following is a 409-amino-acid chain: Arginine deiminase (409 aa).

Residue Cys-399 is the Amidino-cysteine intermediate of the active site.

This sequence belongs to the arginine deiminase family.

The protein resides in the cytoplasm. The enzyme catalyses L-arginine + H2O = L-citrulline + NH4(+). The protein operates within amino-acid degradation; L-arginine degradation via ADI pathway; carbamoyl phosphate from L-arginine: step 1/2. In Borreliella afzelii (Borrelia afzelii), this protein is Arginine deiminase (arcA).